The chain runs to 311 residues: Tryptophan 2,3-dioxygenase (311 aa).

The tract at residues 1–37 is disordered; that stretch reads MQPPGGDAPAGCPFSGARAAQPAQAAHEAPHVPGEAD. Residues 17-27 are compositionally biased toward low complexity; that stretch reads ARAAQPAQAAH. Substrate-binding positions include 80-84, tyrosine 142, and arginine 146; that span reads FIIQH. Histidine 269 serves as a coordination point for heme. Residue threonine 283 participates in substrate binding.

This sequence belongs to the tryptophan 2,3-dioxygenase family. In terms of assembly, homotetramer. Heme serves as cofactor.

The catalysed reaction is L-tryptophan + O2 = N-formyl-L-kynurenine. Its pathway is amino-acid degradation; L-tryptophan degradation via kynurenine pathway; L-kynurenine from L-tryptophan: step 1/2. Heme-dependent dioxygenase that catalyzes the oxidative cleavage of the L-tryptophan (L-Trp) pyrrole ring and converts L-tryptophan to N-formyl-L-kynurenine. Catalyzes the oxidative cleavage of the indole moiety. This is Tryptophan 2,3-dioxygenase from Burkholderia orbicola (strain MC0-3).